Consider the following 278-residue polypeptide: Small ribosomal subunit protein uS3 (278 aa).

One can recognise a KH type-2 domain in the interval 38 to 106 (IRKLLSKGME…QVQLNILEVK (69 aa)). The interval 213 to 278 (RQAQAAARAG…APAPAENQEG (66 aa)) is disordered. The segment covering 214-223 (QAQAAARAGV) has biased composition (low complexity). The segment covering 232–253 (RGGERPSRGSRGDRPTRADRGG) has biased composition (basic and acidic residues). A compositionally biased stretch (low complexity) spans 259–278 (EATGAATEQAAPAPAENQEG).

The protein belongs to the universal ribosomal protein uS3 family. As to quaternary structure, part of the 30S ribosomal subunit. Forms a tight complex with proteins S10 and S14.

Functionally, binds the lower part of the 30S subunit head. Binds mRNA in the 70S ribosome, positioning it for translation. This is Small ribosomal subunit protein uS3 from Nocardioides sp. (strain ATCC BAA-499 / JS614).